A 435-amino-acid chain; its full sequence is Protein GOLM2 (435 aa).

Position 1 is an N-acetylmethionine (M1). At M1–P14 the chain is on the cytoplasmic side. A helical; Signal-anchor for type II membrane protein membrane pass occupies residues S15–I35. Residues I35 to T194 adopt a coiled-coil conformation. Over S36–L435 the chain is Lumenal. Basic and acidic residues-rich tracts occupy residues Q191–A212 and D223–K239. Disordered regions lie at residues Q191–K239 and P271–L435. Position 232 is a phosphoserine (S232). Polar residues-rich tracts occupy residues Q282 to S294 and H302 to L320. Positions A343–D361 are enriched in basic and acidic residues. At S365 the chain carries Phosphoserine. The segment covering Y398 to R417 has biased composition (acidic residues). Positions D425–L435 are enriched in basic and acidic residues.

The protein belongs to the GOLM family.

The protein localises to the membrane. The polypeptide is Protein GOLM2 (Mus musculus (Mouse)).